The following is a 135-amino-acid chain: ATP synthase epsilon chain (135 aa).

The protein belongs to the ATPase epsilon chain family. As to quaternary structure, F-type ATPases have 2 components, CF(1) - the catalytic core - and CF(0) - the membrane proton channel. CF(1) has five subunits: alpha(3), beta(3), gamma(1), delta(1), epsilon(1). CF(0) has three main subunits: a, b and c.

It is found in the cell inner membrane. Functionally, produces ATP from ADP in the presence of a proton gradient across the membrane. The chain is ATP synthase epsilon chain from Rhodopseudomonas palustris (strain BisB5).